A 147-amino-acid chain; its full sequence is Large ribosomal subunit protein uL13 (147 aa).

Belongs to the universal ribosomal protein uL13 family. As to quaternary structure, part of the 50S ribosomal subunit.

In terms of biological role, this protein is one of the early assembly proteins of the 50S ribosomal subunit, although it is not seen to bind rRNA by itself. It is important during the early stages of 50S assembly. This is Large ribosomal subunit protein uL13 from Lactiplantibacillus plantarum (strain ATCC BAA-793 / NCIMB 8826 / WCFS1) (Lactobacillus plantarum).